Here is a 653-residue protein sequence, read N- to C-terminus: Poly [ADP-ribose] polymerase 2 (653 aa).

Residues 2-36 (SARLRVADVRAELQRRGLDVSGTKPALVRRLDAAI) form the SAP 1 domain. The interval 64–84 (NCGNNKRKRSGDGGEEGNGDT) is disordered. The Nuclear localization signal signature appears at 69-72 (KRKR). One can recognise an SAP 2 domain in the interval 91 to 125 (LEGMSYRELQGLAKARGVAANGGKKDVIQRLLSAT). One can recognise a WGR domain in the interval 179–276 (NYHVLQVGDE…KNFKCYAKKY (98 aa)). The PARP alpha-helical domain occupies 301–419 (ETKLETRIAQ…EIEIATKLLE (119 aa)). The 227-residue stretch at 427–653 (DPLYARYKQL…LHVNFNFKRR (227 aa)) folds into the PARP catalytic domain.

The protein belongs to the ARTD/PARP family.

The protein resides in the nucleus. It catalyses the reaction NAD(+) + (ADP-D-ribosyl)n-acceptor = nicotinamide + (ADP-D-ribosyl)n+1-acceptor + H(+).. The catalysed reaction is L-aspartyl-[protein] + NAD(+) = 4-O-(ADP-D-ribosyl)-L-aspartyl-[protein] + nicotinamide. It carries out the reaction L-glutamyl-[protein] + NAD(+) = 5-O-(ADP-D-ribosyl)-L-glutamyl-[protein] + nicotinamide. Its function is as follows. Involved in the base excision repair (BER) pathway, by catalyzing the poly(ADP-ribosyl)ation of a limited number of acceptor proteins involved in chromatin architecture and in DNA metabolism. This modification follows DNA damages and appears as an obligatory step in a detection/signaling pathway leading to the reparation of DNA strand breaks. In Zea mays (Maize), this protein is Poly [ADP-ribose] polymerase 2 (PARP2).